We begin with the raw amino-acid sequence, 745 residues long: Aminopeptidase NAALADL1 (745 aa).

The Cytoplasmic segment spans residues 1-6 (MHWAKI). The chain crosses the membrane as a helical; Signal-anchor for type II membrane protein span at residues 7-28 (LGVGIGAAALLGLGIILGHFAI). Residues 29–745 (PKATEPLASS…AATLQPVTDL (717 aa)) are Extracellular-facing. 3 N-linked (GlcNAc...) asparagine glycosylation sites follow: Asn128, Asn141, and Asn235. Ca(2+) is bound by residues Thr263 and Leu266. N-linked (GlcNAc...) asparagine glycans are attached at residues Asn279, Asn304, and Asn350. A disulfide bridge connects residues Cys301 and Cys318. His373 and Asp383 together coordinate Zn(2+). Glu421 acts as the Proton donor/acceptor in catalysis. Glu422 is a binding site for Zn(2+). Residues Glu430 and Glu433 each coordinate Ca(2+). Residue Asp450 coordinates Zn(2+). 2 N-linked (GlcNAc...) asparagine glycosylation sites follow: Asn456 and Asn497. His550 contacts Zn(2+). Residues Asn593 and Asn620 are each glycosylated (N-linked (GlcNAc...) asparagine).

Belongs to the peptidase M28 family. M28B subfamily. In terms of assembly, homodimer. Zn(2+) is required as a cofactor. N-glycosylated. In terms of tissue distribution, detected on apical villi on the brush border membrane of ileum enterocytes (at protein level). Mainly expressed in the distal small intestine.

It localises to the apical cell membrane. In terms of biological role, aminopeptidase with broad substrate specificity. Has lower activity with substrates that have Asp or Glu in the P2' position, or Pro in the P3' position. Lacks activity with substrates that have both Pro in the P3' position and Asp or Glu in the P2' position. Lacks carboxypeptidase activity. Lacks dipeptidyl-peptidase IV type activity. The polypeptide is Aminopeptidase NAALADL1 (Naaladl1) (Rattus norvegicus (Rat)).